The chain runs to 251 residues: 5'-nucleotidase SurE (251 aa).

A divalent metal cation is bound by residues aspartate 8, aspartate 9, serine 39, and asparagine 95.

It belongs to the SurE nucleotidase family. A divalent metal cation serves as cofactor.

The protein resides in the cytoplasm. The enzyme catalyses a ribonucleoside 5'-phosphate + H2O = a ribonucleoside + phosphate. Its function is as follows. Nucleotidase that shows phosphatase activity on nucleoside 5'-monophosphates. The polypeptide is 5'-nucleotidase SurE (Ralstonia nicotianae (strain ATCC BAA-1114 / GMI1000) (Ralstonia solanacearum)).